We begin with the raw amino-acid sequence, 290 residues long: Fructose-1,6-bisphosphatase class 1 (290 aa).

Positions 78, 96, 98, and 99 each coordinate Mg(2+). Substrate contacts are provided by residues 99–102, Y201, and K226; that span reads DGSS. A Mg(2+)-binding site is contributed by E232.

The protein belongs to the FBPase class 1 family. As to quaternary structure, homotetramer. It depends on Mg(2+) as a cofactor.

It localises to the cytoplasm. The enzyme catalyses beta-D-fructose 1,6-bisphosphate + H2O = beta-D-fructose 6-phosphate + phosphate. It participates in carbohydrate biosynthesis; gluconeogenesis. The polypeptide is Fructose-1,6-bisphosphatase class 1 (Helicobacter pylori (strain ATCC 700392 / 26695) (Campylobacter pylori)).